We begin with the raw amino-acid sequence, 425 residues long: Potassium/proton antiporter CemA (425 aa).

A helical membrane pass occupies residues 89–109 (LFLTTVKCLFILLFVPLGINF). Residues 159–278 (LSENQIFFGL…KTDFASVFRT (120 aa)) form an insert region. Positions 173–192 (STFPSSEKSQKSEHFSNQDE) are disordered. The segment covering 180–192 (KSQKSEHFSNQDE) has biased composition (basic and acidic residues). Transmembrane regions (helical) follow at residues 300 to 320 (IEAI…CYLL), 350 to 370 (ILFI…ELFF), and 386 to 406 (IFLL…YLIF).

Belongs to the CemA family.

It localises to the plastid. It is found in the chloroplast inner membrane. It carries out the reaction K(+)(in) + H(+)(out) = K(+)(out) + H(+)(in). Functionally, contributes to K(+)/H(+) antiport activity by supporting proton efflux to control proton extrusion and homeostasis in chloroplasts in a light-dependent manner to modulate photosynthesis. Prevents excessive induction of non-photochemical quenching (NPQ) under continuous-light conditions. Indirectly promotes efficient inorganic carbon uptake into chloroplasts. This chain is Potassium/proton antiporter CemA, found in Tetradesmus obliquus (Green alga).